Here is a 763-residue protein sequence, read N- to C-terminus: Amyloid beta precursor like protein 2 (763 aa).

The first 31 residues, 1-31 (MAATGTAAAAATGRLLLLLLVGLTAPALALA), serve as a signal peptide directing secretion. Topologically, residues 32–692 (GYIEALAANA…PLREDFSLSS (661 aa)) are extracellular. Positions 46–139 (AVAEPQIAMF…PFKCLVGEFV (94 aa)) are GFLD subdomain. One can recognise an E1 domain in the interval 46 to 205 (AVAEPQIAMF…HGTEYVCCPQ (160 aa)). Intrachain disulfides connect Cys56-Cys80, Cys91-Cys133, Cys116-Cys123, Cys149-Cys203, Cys160-Cys190, and Cys174-Cys202. Residues 147-205 (EKCQFFHKERMEVCENHQHWHTVVKEACLTQGMTLYSYGMLLPCGVDQFHGTEYVCCPQ) form a cuBD subdomain region. Positions 163, 167, and 184 each coordinate Cu cation. Residues 211 to 299 (SVSKEEEEED…EPGSDGTMSD (89 aa)) are disordered. Composition is skewed to acidic residues over residues 215 to 233 (EEEEEDEEEEEEEDEEEDY) and 242 to 269 (TEADLEDFTEAAVDEDDEDEEEGEEVVE). Positions 270–282 (DRDYYYDTFKGDD) are enriched in basic and acidic residues. Residues 306–364 (VKAVCSQEAMTGPCRAVMPRWYFDLSKGKCVRFIYGGCGGNRNNFESEDYCMAVCKAMI) form the BPTI/Kunitz inhibitor domain. 3 disulfide bridges follow: Cys310–Cys360, Cys319–Cys343, and Cys335–Cys356. Residues 373-564 (DVDVYFETSA…QEIQEEIDEL (192 aa)) form the E2 domain. Ser590 is subject to Phosphoserine; by FAM20C. A glycan (O-linked (Xyl...) (chondroitin sulfate) serine) is linked at Ser626. A helical transmembrane segment spans residues 693–716 (SALIGLLVIAVAIATVIVISLVML). At 717–763 (RKRQYGTISHGIVEVDPMLTPEERHLNKMQNHGYENPTYKYLEQMQI) the chain is on the cytoplasmic side. The segment at 749–763 (GYENPTYKYLEQMQI) is interaction with DAB2. Residues 750–755 (YENPTY) carry the NPXY motif motif.

It belongs to the APP family. In terms of assembly, interacts with CPEB1. Interacts (via NPXY motif) with DAB2 (via PID domain); the interaction is impaired by tyrosine phosphorylation of the NPXY motif. Interacts (via cytoplasmic domain) with APBB2/FE65L. Interacts (via intracellular domain) with APBB3/FE65L2. The BPTI/Kunitz inhibitor domain is O-glycosylated. In terms of tissue distribution, expressed in placenta, brain, heart, lung, liver, kidney and endothelial tissues.

It localises to the cell membrane. The protein resides in the nucleus. Its function is as follows. May play a role in the regulation of hemostasis. The soluble form may have inhibitory properties towards coagulation factors. May interact with cellular G-protein signaling pathways. May bind to the DNA 5'-GTCACATG-3'(CDEI box). Inhibits trypsin, chymotrypsin, plasmin, factor XIA and plasma and glandular kallikrein. Modulates the Cu/Zn nitric oxide-catalyzed autodegradation of GPC1 heparan sulfate side chains in fibroblasts. The sequence is that of Amyloid beta precursor like protein 2 from Homo sapiens (Human).